A 347-amino-acid polypeptide reads, in one-letter code: KIN17-like protein KLP (347 aa).

Residues 222 to 225 (KRKR) carry the Nuclear localization signal (NLS) motif.

This sequence belongs to the KIN17 family.

The protein localises to the cytoplasm. It localises to the nucleus. In terms of biological role, may act as repressor of root growth during copper excess and of hypocotyl growth in the dark. This is KIN17-like protein KLP from Arabidopsis thaliana (Mouse-ear cress).